The primary structure comprises 161 residues: Transcription antitermination protein NusB (161 aa).

The interval 1–22 is disordered; it reads MNLSDFKPGEGTEVPEEEKSVS.

It belongs to the NusB family.

Its function is as follows. Involved in transcription antitermination. Required for transcription of ribosomal RNA (rRNA) genes. Binds specifically to the boxA antiterminator sequence of the ribosomal RNA (rrn) operons. This Hydrogenovibrio crunogenus (strain DSM 25203 / XCL-2) (Thiomicrospira crunogena) protein is Transcription antitermination protein NusB.